The primary structure comprises 221 residues: Small ribosomal subunit protein uS3 (221 aa).

In terms of domain architecture, KH type-2 spans Ile39–Lys108.

This sequence belongs to the universal ribosomal protein uS3 family. As to quaternary structure, part of the 30S ribosomal subunit. Forms a tight complex with proteins S10 and S14.

Binds the lower part of the 30S subunit head. Binds mRNA in the 70S ribosome, positioning it for translation. The sequence is that of Small ribosomal subunit protein uS3 from Clostridium novyi (strain NT).